A 111-amino-acid chain; its full sequence is uncharacterized protein (111 aa).

The next 3 membrane-spanning stretches (helical) occupy residues 4–23 (LHQV…LGHV), 39–61 (IYLG…VLSA), and 65–84 (SGIQ…EAVL).

The protein localises to the cell membrane. This is an uncharacterized protein from Bacillus subtilis (strain 168).